A 942-amino-acid polypeptide reads, in one-letter code: Protein translocase subunit SecA (942 aa).

ATP is bound by residues Q90, 108–112 (GEGKT), and D509.

The protein belongs to the SecA family. Monomer and homodimer. Part of the essential Sec protein translocation apparatus which comprises SecA, SecYEG and auxiliary proteins SecDF. Other proteins may also be involved.

It is found in the cell inner membrane. It localises to the cellular thylakoid membrane. The protein resides in the cytoplasm. It catalyses the reaction ATP + H2O + cellular proteinSide 1 = ADP + phosphate + cellular proteinSide 2.. Its function is as follows. Part of the Sec protein translocase complex. Interacts with the SecYEG preprotein conducting channel. Has a central role in coupling the hydrolysis of ATP to the transfer of proteins into and across the cell membrane, serving as an ATP-driven molecular motor driving the stepwise translocation of polypeptide chains across the membrane. Probably participates in protein translocation into and across both the cytoplasmic and thylakoid membranes in cyanobacterial cells. This chain is Protein translocase subunit SecA, found in Prochlorococcus marinus (strain NATL2A).